A 551-amino-acid chain; its full sequence is Structure-specific endonuclease subunit MUS81 (551 aa).

Disordered stretches follow at residues 84 to 131 (HLAS…VGYW) and 229 to 259 (FRPE…QQRP). The span at 92–107 (APSSPSGKKGASKGPP) shows a compositional bias: low complexity. Ser-95 carries the post-translational modification Phosphoserine. Residues 110-131 (VQDSSMPVPTQPQAGSTSVGYW) are compositionally biased toward polar residues. Residues 124–244 (GSTSVGYWPA…HGEDSAVPEA (121 aa)) are interaction with BLM. The tract at residues 131–230 (WPAQNSGARE…GLSTRHAGFR (100 aa)) is winged helix domain (WHD); critical for endonuclease activity. The span at 229–238 (FRPEEHHGED) shows a compositional bias: basic and acidic residues. The ERCC4 domain maps to 270-372 (LLCVDIGETR…HRVYLVEEHG (103 aa)). Catalysis depends on residues Asp-274, Glu-277, and Asp-307. Mg(2+) is bound by residues Asp-274, Glu-277, Asp-307, Glu-333, and Arg-334. The tract at residues 471–545 (VREVFARQLM…LSRTLYQLYC (75 aa)) is helix-hairpin-helix (2HhH); involved in DNA recognition and bending.

Belongs to the XPF family. In terms of assembly, part of the heterodimeric DNA structure-specific endonuclease complex MUS81-EME1. Part of the heterodimeric DNA structure-specific endonuclease complex MUS81-EME2. Interacts with BLM; may stimulate the endonuclease activity of MUS81. Interacts with SLX4/BTBD12; this interaction is direct and links the MUS81-EME1 complex to SLX4, which may coordinate the action of the structure-specific endonuclease during DNA repair. Interacts with DCLRE1B/Apollo. Interacts with RECQL5; this interaction stimulates mitotic DNA synthesis. Interacts with CHEK2. Requires Mg(2+) as cofactor. As to expression, expressed highly in testis. Expressed also in bone marrow, brain, thymus and to a lesser extent in heart and skeletal muscle, colon, kidney and spleen.

The protein localises to the nucleus. It localises to the nucleolus. Its function is as follows. Catalytic subunit of two functionally distinct, structure-specific, heterodimeric DNA endonucleases MUS81-EME1 and MUS81-EME2 that are involved in the maintenance of genome stability. Both endonucleases have essentially the same substrate specificity though MUS81-EME2 is more active than its MUS81-EME1 counterpart. Both cleave 3'-flaps and nicked Holliday junctions, and exhibit limited endonuclease activity with 5' flaps and nicked double-stranded DNAs. MUS81-EME2 which is active during the replication of DNA is more specifically involved in replication fork processing. Replication forks frequently encounter obstacles to their passage, including DNA base lesions, DNA interstrand cross-links, difficult-to-replicate sequences, transcription bubbles, or tightly bound proteins. One mechanism for the restart of a stalled replication fork involves nucleolytic cleavage mediated by the MUS81-EME2 endonuclease. By acting upon the stalled fork, MUS81-EME2 generates a DNA double-strand break (DSB) that can be repaired by homologous recombination, leading to the restoration of an active fork. MUS81-EME2 could also function in telomere maintenance. MUS81-EME1, on the other hand, is active later in the cell cycle and functions in the resolution of mitotic recombination intermediates including the Holliday junctions, the four-way DNA intermediates that form during homologous recombination. This is Structure-specific endonuclease subunit MUS81 from Mus musculus (Mouse).